The following is a 397-amino-acid chain: Argininosuccinate synthase (397 aa).

Position 9-17 (9-17 (AYSGGLDTS)) interacts with ATP. Tyrosine 86 contributes to the L-citrulline binding site. Residue glycine 116 participates in ATP binding. Positions 118, 122, and 123 each coordinate L-aspartate. Asparagine 122 serves as a coordination point for L-citrulline. 4 residues coordinate L-citrulline: arginine 126, serine 174, glutamate 259, and tyrosine 271.

The protein belongs to the argininosuccinate synthase family. Type 1 subfamily. As to quaternary structure, homotetramer.

It is found in the cytoplasm. The catalysed reaction is L-citrulline + L-aspartate + ATP = 2-(N(omega)-L-arginino)succinate + AMP + diphosphate + H(+). The protein operates within amino-acid biosynthesis; L-arginine biosynthesis; L-arginine from L-ornithine and carbamoyl phosphate: step 2/3. The protein is Argininosuccinate synthase of Lactococcus lactis subsp. cremoris (strain SK11).